A 251-amino-acid chain; its full sequence is Zwei Ig domain protein zig-3 (251 aa).

The signal sequence occupies residues 1 to 19 (MLLICISVLAAISAHPLSS). 2 Ig-like C2-type domains span residues 42–144 (PSLK…AKIS) and 160–244 (PVIT…TFLY). Cystine bridges form between C65-C128 and C181-C228.

As to expression, expressed in PVT, AIM and ASI neurons, in vulva and weakly in body wall muscles.

It localises to the secreted. In terms of biological role, required for maintaining axon position of PVQ and PVP neurons postembryonically in the ventral nerve cord (VNC) by preventing axons drifting into the opposite side of the VNC that could occur during body growth and movement. The chain is Zwei Ig domain protein zig-3 from Caenorhabditis elegans.